Consider the following 356-residue polypeptide: S-adenosylmethionine:tRNA ribosyltransferase-isomerase (356 aa).

It belongs to the QueA family. In terms of assembly, monomer.

It is found in the cytoplasm. It carries out the reaction 7-aminomethyl-7-carbaguanosine(34) in tRNA + S-adenosyl-L-methionine = epoxyqueuosine(34) in tRNA + adenine + L-methionine + 2 H(+). It functions in the pathway tRNA modification; tRNA-queuosine biosynthesis. Transfers and isomerizes the ribose moiety from AdoMet to the 7-aminomethyl group of 7-deazaguanine (preQ1-tRNA) to give epoxyqueuosine (oQ-tRNA). The protein is S-adenosylmethionine:tRNA ribosyltransferase-isomerase of Citrobacter koseri (strain ATCC BAA-895 / CDC 4225-83 / SGSC4696).